A 1062-amino-acid polypeptide reads, in one-letter code: Suppressor of mar1-1 protein (1062 aa).

Residues 1–17 (MSENTTAPSDNITNEQR) are compositionally biased toward polar residues. 6 disordered regions span residues 1–27 (MSEN…DDVD), 188–217 (ENSS…ASTS), 267–337 (TKQE…KKRT), 370–398 (SSKF…SATQ), 595–634 (EIST…QQEG), and 681–804 (SGEE…GNLG). At serine 2 the chain carries N-acetylserine. Residues 189–205 (NSSNNTSSQHNTSSSRR) show a composition bias toward low complexity. Composition is skewed to polar residues over residues 267-279 (TKQE…APSS), 287-298 (SLTSVPQRTNNE), and 305-323 (STAN…NNLI). Positions 325–335 (IKRKRGRPPKK) are enriched in basic residues. 2 stretches are compositionally biased toward polar residues: residues 370 to 385 (SSKF…NPVS) and 610 to 629 (TKGS…GISD). Phosphoserine is present on residues serine 378, serine 379, serine 628, and serine 681. Positions 685–699 (AITKENAEYERKTPG) are enriched in basic and acidic residues. A Phosphothreonine modification is found at threonine 697. The segment covering 704–716 (TTFVPLENSQPSD) has biased composition (polar residues). Serine 712 bears the Phosphoserine; by ATM or ATR mark. Serine 738 bears the Phosphoserine mark. The span at 781-793 (KGTSSIHNDTESA) shows a compositional bias: polar residues. A Phosphothreonine modification is found at threonine 817.

In terms of assembly, interacts with RFM1. This interaction is required to recruit HST1.

Its subcellular location is the nucleus. In terms of biological role, DNA-binding protein that specifically binds the regulatory region of middle sporulation genes (MSE). Required for the repression of middle sporulation genes during vegetative growth. Represses expression via the recruitment of histone deacetylase HST1. This is Suppressor of mar1-1 protein (SUM1) from Saccharomyces cerevisiae (strain ATCC 204508 / S288c) (Baker's yeast).